Here is an 876-residue protein sequence, read N- to C-terminus: Alanine--tRNA ligase (876 aa).

Residue K74 is modified to N6-acetyllysine. Residues H564, H568, C666, and H670 each contribute to the Zn(2+) site.

This sequence belongs to the class-II aminoacyl-tRNA synthetase family. As to quaternary structure, homotetramer. The cofactor is Zn(2+).

The protein resides in the cytoplasm. The enzyme catalyses tRNA(Ala) + L-alanine + ATP = L-alanyl-tRNA(Ala) + AMP + diphosphate. Catalyzes the attachment of alanine to tRNA(Ala) in a two-step reaction: alanine is first activated by ATP to form Ala-AMP and then transferred to the acceptor end of tRNA(Ala). Also edits incorrectly charged Ser-tRNA(Ala) and Gly-tRNA(Ala) via its editing domain. The chain is Alanine--tRNA ligase from Shigella dysenteriae serotype 1 (strain Sd197).